The chain runs to 1298 residues: DNA repair protein rad-50 (1298 aa).

9 residues coordinate ATP: Arg13, Asn38, Gly39, Gly41, Lys42, Thr43, Thr44, Ile66, and Gln158. Thr43 contributes to the Mg(2+) binding site. Mg(2+) is bound at residue Gln158. 3 coiled-coil regions span residues 222-291, 317-598, and 622-660; these read ARQN…IRVE, EERA…QYRK, and AEEVSEKLENLRKRLKKARKDLAPLSAKSNLYDSYIEES. A Zinc-hook domain is found at 622–719; that stretch reads AEEVSEKLEN…EEIIIVKAEG (98 aa). Residues Cys666 and Cys669 each coordinate Zn(2+). 2 coiled-coil regions span residues 691–719 and 754–1092; these read LSFPTEQEELEKLVSKLEKEEIIIVKAEG and KNEK…KESI.

It belongs to the SMC family. RAD50 subfamily. Component of the MRN complex composed of two heterodimers rad-50 and mre-11 associated with a single nbs-1. Zn(2+) is required as a cofactor.

Its subcellular location is the nucleus. It is found in the chromosome. It carries out the reaction ATP + H2O = ADP + phosphate + H(+). Component of the MRN complex, which plays a central role in double-strand break (DSB) repair, DNA recombination, maintenance of telomere integrity and meiosis. The MRN complex is involved in the repair of DNA double-strand breaks (DSBs) via homologous recombination (HR), an error-free mechanism which primarily occurs during S and G2 phases. The complex (1) mediates the end resection of damaged DNA, which generates proper single-stranded DNA, a key initial steps in HR, and is (2) required for the recruitment of other repair factors and efficient activation of ATM and ATR upon DNA damage. The MRN complex possesses single-strand endonuclease activity and double-strand-specific 3'-5' exonuclease activity, which are provided by mre-11, to initiate end resection, which is required for single-strand invasion and recombination. Within the complex, rad-50 is both required to bind DNA ends and hold them in close proximity and regulate the activity of mre-11. Rad-50 provides an ATP-dependent control of mre-11 by positioning DNA ends into the mre-11 active site: ATP-binding induces a large structural change from an open form with accessible mre-11 nuclease sites into a closed form. The sequence is that of DNA repair protein rad-50 (rad-50) from Caenorhabditis elegans.